The following is a 326-amino-acid chain: Ras association domain-containing protein 2 (326 aa).

One can recognise a Ras-associating domain in the interval 176–264 (YNHKTSVFTP…SKVFLMEKDQ (89 aa)). The 48-residue stretch at 272–319 (VAQYIKFEMPVLKSFIQKLQEEEDREVEKLMQKYTVLRLMIRQRLEEI) folds into the SARAH domain.

In terms of assembly, interacts directly with activated KRAS in a GTP-dependent manner. Interacts (via SARAH domain) with STK3/MST2 and STK4/MST1. In terms of processing, phosphorylated by STK3/MST2 and STK4/MST1.

It localises to the nucleus. It is found in the cytoplasm. The protein localises to the chromosome. The protein resides in the centromere. Its subcellular location is the kinetochore. In terms of biological role, potential tumor suppressor. Acts as a KRAS-specific effector protein. May promote apoptosis and cell cycle arrest. Stabilizes STK3/MST2 by protecting it from proteasomal degradation. The sequence is that of Ras association domain-containing protein 2 (Rassf2) from Rattus norvegicus (Rat).